Here is a 292-residue protein sequence, read N- to C-terminus: Phosphoribulokinase, plasmid (292 aa).

Residue 12-20 (GSSGAGTTS) participates in ATP binding.

Belongs to the phosphoribulokinase family. As to quaternary structure, homooctamer.

It carries out the reaction D-ribulose 5-phosphate + ATP = D-ribulose 1,5-bisphosphate + ADP + H(+). Its pathway is carbohydrate biosynthesis; Calvin cycle. In Cupriavidus necator (strain ATCC 17699 / DSM 428 / KCTC 22496 / NCIMB 10442 / H16 / Stanier 337) (Ralstonia eutropha), this protein is Phosphoribulokinase, plasmid (cfxP).